Reading from the N-terminus, the 311-residue chain is Protein lifeguard 3 (311 aa).

2 disordered regions span residues 1-37 (MSNPSAPPPYEDRNPLYPGPPPPGGYGQPSVLPGGYP) and 50-72 (PAGYPQPMPPTHPMPMNYGPGHG). Positions 53-62 (YPQPMPPTHP) are enriched in pro residues. A phosphoserine mark is found at Ser81 and Ser83. The next 7 membrane-spanning stretches (helical) occupy residues 110–130 (LLITVAIIAIFTFVEPVSAFV), 134–154 (VAVYYVSYAVFVVTYLILACC), 165–185 (IILLTLFTFAMGFMTGTISSM), 190–210 (AVIIAMIITAVVSISVTIFCF), 221–241 (GLFCVLGIVLLVTGIVTSIVL), 246–266 (VYWLHMLYAALGAICFTLFLA), and 286–306 (ITGALQIYTDIIYIFTFVLQL).

The protein belongs to the BI1 family. LFG subfamily.

The protein resides in the membrane. It localises to the lysosome membrane. It is found in the endosome membrane. Negatively regulates aortic matrix metalloproteinase-9 (MMP9) production and may play a protective role in vascular remodeling. The sequence is that of Protein lifeguard 3 (TMBIM1) from Homo sapiens (Human).